Reading from the N-terminus, the 626-residue chain is PEX5-related protein (626 aa).

3 disordered regions span residues 1-20, 118-167, and 181-235; these read MYQG…LSSD, VSQT…SSLD, and KFHG…ASEL. Residues 181-198 are compositionally biased toward basic and acidic residues; it reads KFHGDRNTKGHPMAERKS. A Phosphoserine modification is found at S205. A compositionally biased stretch (low complexity) spans 225 to 235; that stretch reads SALNSESASEL. A phosphoserine mark is found at S253, S257, and S261. TPR repeat units lie at residues 326–359, 360–393, and 395–427; these read WPGA…DPGD, AEAW…QPNN, and KALM…NPKY. S445 and S447 each carry phosphoserine. 3 TPR repeats span residues 474-507, 509-541, and 543-575; these read PDLQ…RPED, SLWN…QPGF, and RSRY…QRKS.

Belongs to the peroxisomal targeting signal receptor family. In terms of assembly, interacts with RAB8B. Forms an obligate 4:4 complex with HCN2. May interact with the C-terminal PTS1-type tripeptide peroxisomal targeting signal (SKL-type); the relevance of such interaction is however unclear. Interacts with HCN3. Interacts with HCN4 with a 4:4 HCN4:PEX5L stoichiometry; reduces the effects of cAMP on the voltage-dependence and rate of activation of HCN4. Mainly expressed in brain. Also expressed in pancreas, testis and pituitary.

Its subcellular location is the cytoplasm. The protein localises to the membrane. In terms of biological role, accessory subunit of hyperpolarization-activated cyclic nucleotide-gated (HCN) channels, regulating their cell-surface expression and cyclic nucleotide dependence. The sequence is that of PEX5-related protein (PEX5L) from Homo sapiens (Human).